The chain runs to 518 residues: Arrestin-related trafficking adapter 10 (518 aa).

A Glycyl lysine isopeptide (Lys-Gly) (interchain with G-Cter in ubiquitin) cross-link involves residue K118.

This sequence belongs to the ART10 family. As to quaternary structure, interacts with RSP5. In terms of processing, ubiquitinated by RSP5.

It localises to the cytoplasm. Its function is as follows. May regulate endocytosis by recruiting RSP5 ubiquitin ligase activity to specific plasma membrane proteins in response to extracellular stimuli. The sequence is that of Arrestin-related trafficking adapter 10 (ART10) from Saccharomyces cerevisiae (strain RM11-1a) (Baker's yeast).